The sequence spans 574 residues: MRWSRFFAYTQKEAPKDAVVASHKYLVRGGYIKQVAAGIYDFAPLGKMVLDNIRDIIKKEMDASGAQEVMLTFVTPNELWEETGRAKKYGKELLRIKDRKDQSFVLAPTNEESVVDLVRGTIKSYKQLPVNLYQINLKFRDEARPRFGLLRGREFIMKDAYSFHATEEDLDREFNLMEETYKNIFTKLGLDFRAVWADSGAIGGSGSKEFMVLADTGEDDIVVCSECDYAANIEVATRKHEKRENPVKTEVIEEVHTPDMKSIEDVCNFIGVDPYFSIKAVVKKAIYDDGKSEIVVFFVRGTDTLEETKATNAVGALELVDASEEELEAVGLVPGFIGPFGLPSSVRYIIDDDLRMAEELVCGANKKDYHIKGAGLLDANLLGNLTVYRDIAAVKEGDKCPKCGAPLKITKGIEVGHIFKLGTVYSEPMNATFLDENGKAKPFIMGCYGIGVSRLISAAIEQNHDDKGIIWPKQIAPFVVDIIVGDVKKDEQLIFAEDLYDKLTSAGVKTILDDRAERFGPKIADFELVGFPVCVIVGKKLKDGKVEVRDRRTGEKFEVEKDMALEKVMEIINN.

The protein belongs to the class-II aminoacyl-tRNA synthetase family. ProS type 1 subfamily. Homodimer.

It is found in the cytoplasm. The catalysed reaction is tRNA(Pro) + L-proline + ATP = L-prolyl-tRNA(Pro) + AMP + diphosphate. Its function is as follows. Catalyzes the attachment of proline to tRNA(Pro) in a two-step reaction: proline is first activated by ATP to form Pro-AMP and then transferred to the acceptor end of tRNA(Pro). As ProRS can inadvertently accommodate and process non-cognate amino acids such as alanine and cysteine, to avoid such errors it has two additional distinct editing activities against alanine. One activity is designated as 'pretransfer' editing and involves the tRNA(Pro)-independent hydrolysis of activated Ala-AMP. The other activity is designated 'posttransfer' editing and involves deacylation of mischarged Ala-tRNA(Pro). The misacylated Cys-tRNA(Pro) is not edited by ProRS. The sequence is that of Proline--tRNA ligase from Nautilia profundicola (strain ATCC BAA-1463 / DSM 18972 / AmH).